Reading from the N-terminus, the 83-residue chain is Transmembrane protein EP84R (83 aa).

Transmembrane regions (helical) follow at residues Ile31–Leu51 and Thr59–Tyr79.

The protein belongs to the asfivirus EP84R family.

Its subcellular location is the virion membrane. This Ornithodoros (relapsing fever ticks) protein is Transmembrane protein EP84R.